A 179-amino-acid polypeptide reads, in one-letter code: Large ribosomal subunit protein uL5 (179 aa).

Belongs to the universal ribosomal protein uL5 family. Part of the 50S ribosomal subunit; part of the 5S rRNA/L5/L18/L25 subcomplex. Contacts the 5S rRNA and the P site tRNA. Forms a bridge to the 30S subunit in the 70S ribosome.

In terms of biological role, this is one of the proteins that bind and probably mediate the attachment of the 5S RNA into the large ribosomal subunit, where it forms part of the central protuberance. In the 70S ribosome it contacts protein S13 of the 30S subunit (bridge B1b), connecting the 2 subunits; this bridge is implicated in subunit movement. Contacts the P site tRNA; the 5S rRNA and some of its associated proteins might help stabilize positioning of ribosome-bound tRNAs. The polypeptide is Large ribosomal subunit protein uL5 (Alkaliphilus oremlandii (strain OhILAs) (Clostridium oremlandii (strain OhILAs))).